Reading from the N-terminus, the 41-residue chain is Large ribosomal subunit protein bL36 (41 aa).

Belongs to the bacterial ribosomal protein bL36 family.

The sequence is that of Large ribosomal subunit protein bL36 from Rickettsia canadensis (strain McKiel).